The chain runs to 708 residues: ARF GTPase-activating protein GIT2 (708 aa).

The 124-residue stretch at 1 to 124 folds into the Arf-GAP domain; that stretch reads MSKRLRSSDV…AFVHRLPCRE (124 aa). The C4-type zinc-finger motif lies at 11–34; sequence CADCNGPDPSWASVNRGTFICDEC. ANK repeat units lie at residues 132 to 161, 166 to 195, and 199 to 228; these read DLSKQLHSSVRTGNLETCLRLLSLGAQANF, KGSTPLHVASKAGQILQAELLAVYGADPGT, and SGKTPVDYARQGGHHELAERLIEIQYELTD. A disordered region spans residues 376 to 592; the sequence is STQHSTESQD…SPTLPSTEDV (217 aa). Residues 384–401 show a composition bias toward acidic residues; that stretch reads QDNDQPDYDSVASDEDTD. Phosphoserine occurs at positions 393 and 396. T400 carries the phosphothreonine modification. Polar residues predominate over residues 407–438; the sequence is SKANRQKLQTLQSENSSLRRQATASACQVQTG. Over residues 504–518 the composition is skewed to low complexity; the sequence is TSSSSLPSFPSTLSW. Phosphoserine is present on residues S508, S511, and S519. The segment covering 519 to 532 has biased composition (basic and acidic residues); it reads SRDESARRASRLEK. Position 536 is a phosphothreonine (T536). Position 563 is a phosphoserine (S563).

As to quaternary structure, may form heterooligomers with GIT1. Directly interacts with protein Piccolo/PCLO. Interacts with PPFIA1 and PPFIA2. Interacts with ARHGEF7. Identified in a complex with ARHGEF6 and BIN2. Interacts with PAK3. Interacts with PXN/paxillin. Interacts with TGFB1I1. Forms a complex with EFNB1 and GRB4/NCK2. In terms of processing, tyrosine phosphorylated when coexpressed in cells with PTK2/FAK1 and SRC. Expressed in the brain (at protein level).

GTPase-activating protein for ADP ribosylation factor family members, including ARF1. The protein is ARF GTPase-activating protein GIT2 (Git2) of Mus musculus (Mouse).